We begin with the raw amino-acid sequence, 150 residues long: Protein ORF35 (150 aa).

The chain is Protein ORF35 (ORF35) from Homo sapiens (Human).